The chain runs to 432 residues: Glutamate-1-semialdehyde 2,1-aminomutase (432 aa).

Lysine 272 carries the N6-(pyridoxal phosphate)lysine modification.

It belongs to the class-III pyridoxal-phosphate-dependent aminotransferase family. HemL subfamily. Homodimer. Pyridoxal 5'-phosphate serves as cofactor.

The protein localises to the cytoplasm. It carries out the reaction (S)-4-amino-5-oxopentanoate = 5-aminolevulinate. It participates in porphyrin-containing compound metabolism; protoporphyrin-IX biosynthesis; 5-aminolevulinate from L-glutamyl-tRNA(Glu): step 2/2. Its pathway is porphyrin-containing compound metabolism; chlorophyll biosynthesis. The sequence is that of Glutamate-1-semialdehyde 2,1-aminomutase from Cyanothece sp. (strain PCC 7425 / ATCC 29141).